We begin with the raw amino-acid sequence, 414 residues long: Methylthioribose-1-phosphate isomerase (414 aa).

Positions 205 to 215 (SQSQGSENPPS) are enriched in polar residues. Residues 205 to 224 (SQSQGSENPPSKKQKKDAAP) are disordered. Asp283 (proton donor) is an active-site residue.

It belongs to the eIF-2B alpha/beta/delta subunits family. MtnA subfamily.

It is found in the cytoplasm. It localises to the nucleus. It carries out the reaction 5-(methylsulfanyl)-alpha-D-ribose 1-phosphate = 5-(methylsulfanyl)-D-ribulose 1-phosphate. The protein operates within amino-acid biosynthesis; L-methionine biosynthesis via salvage pathway; L-methionine from S-methyl-5-thio-alpha-D-ribose 1-phosphate: step 1/6. In terms of biological role, catalyzes the interconversion of methylthioribose-1-phosphate (MTR-1-P) into methylthioribulose-1-phosphate (MTRu-1-P). The chain is Methylthioribose-1-phosphate isomerase from Zygosaccharomyces rouxii (strain ATCC 2623 / CBS 732 / NBRC 1130 / NCYC 568 / NRRL Y-229).